The chain runs to 341 residues: Src kinase-associated phosphoprotein 2 (341 aa).

The interval 54–95 (FKDRRDEEFPEPDEADTNDGGSLHSEQTDRDDENAYDGVQQS) is disordered. The segment covering 61 to 70 (EFPEPDEADT) has biased composition (acidic residues). Residues 105–208 (AVLKSGYLEK…WVEHIDFLIK (104 aa)) form the PH domain. The disordered stretch occupies residues 246 to 265 (EEDVPQPSKPKVTLVNKPPP). Positions 279–340 (DYANYFQGLW…PKEYLLELYV (62 aa)) constitute an SH3 domain.

This sequence belongs to the SKAP family. Phosphorylated on tyrosines.

It localises to the cytoplasm. In terms of biological role, may be involved in B-cell and macrophage adhesion processes. May play a role in src signaling pathway. This is Src kinase-associated phosphoprotein 2 (skap2) from Danio rerio (Zebrafish).